A 400-amino-acid chain; its full sequence is Spermatogenic leucine zipper protein 1 (400 aa).

The segment at 1–27 (MADSDSSSEMPAHSPSPSPIPCAKQKP) is disordered. Phosphoserine is present on serine 106. The segment at 116 to 127 (RNKLRFKDDLFI) is helix-loop-helix motif. The tract at residues 128-193 (HFDPERENTM…HIRGEYRKLR (66 aa)) is basic motif. 2 coiled-coil regions span residues 182–231 (SVHI…KDIV) and 268–293 (LIAALLENECQILQQRVDILRELHLH). Serine 207 is subject to Phosphoserine. A leucine-zipper region spans residues 252–273 (LEEQVKKLSQDTHSLHLIAALL). Positions 295-332 (AGPGHEKPLQTSGEQDKKCGEQDKKCGEQDKKCGEQDK) are disordered.

In terms of assembly, interacts with PPP1CC isoform gamma-2. Phosphorylated by MAPK1/ERK2 and MAPK3/ERK1.

The protein localises to the cytoplasm. Its subcellular location is the nucleus. Its function is as follows. Transcription factor that binds to the DNA sequence 5'-CANNTG-3'(E box) and the G-box motif. May play an important role in the regulation of cell proliferation and differentiation during spermatogenesis. The chain is Spermatogenic leucine zipper protein 1 (Spz1) from Rattus norvegicus (Rat).